A 216-amino-acid chain; its full sequence is Imidazole glycerol phosphate synthase subunit HisH (216 aa).

The 215-residue stretch at R2–P216 folds into the Glutamine amidotransferase type-1 domain. C88 functions as the Nucleophile in the catalytic mechanism. Catalysis depends on residues H196 and E198.

Heterodimer of HisH and HisF.

It is found in the cytoplasm. It carries out the reaction 5-[(5-phospho-1-deoxy-D-ribulos-1-ylimino)methylamino]-1-(5-phospho-beta-D-ribosyl)imidazole-4-carboxamide + L-glutamine = D-erythro-1-(imidazol-4-yl)glycerol 3-phosphate + 5-amino-1-(5-phospho-beta-D-ribosyl)imidazole-4-carboxamide + L-glutamate + H(+). The catalysed reaction is L-glutamine + H2O = L-glutamate + NH4(+). Its pathway is amino-acid biosynthesis; L-histidine biosynthesis; L-histidine from 5-phospho-alpha-D-ribose 1-diphosphate: step 5/9. In terms of biological role, IGPS catalyzes the conversion of PRFAR and glutamine to IGP, AICAR and glutamate. The HisH subunit catalyzes the hydrolysis of glutamine to glutamate and ammonia as part of the synthesis of IGP and AICAR. The resulting ammonia molecule is channeled to the active site of HisF. The sequence is that of Imidazole glycerol phosphate synthase subunit HisH from Mesorhizobium japonicum (strain LMG 29417 / CECT 9101 / MAFF 303099) (Mesorhizobium loti (strain MAFF 303099)).